The chain runs to 1036 residues: Protein P200 (1036 aa).

Residues 697 to 727 (ETSELNTESDPSFEPEVEIQPEPEPNFDLET) are disordered. The span at 707–727 (PSFEPEVEIQPEPEPNFDLET) shows a compositional bias: acidic residues. 3 repeat units span residues 718–723 (EPEPNF), 738–743 (EPEPNF), and 776–781 (EPEPNF). The interval 718–781 (EPEPNFDLET…SFESEPEPNF (64 aa)) is 3 X 6 AA repeats of E-P-E-P-N-F. Disordered regions lie at residues 757 to 784 (FESE…FETE) and 798 to 845 (EAEV…ETEA). A compositionally biased stretch (acidic residues) spans 773–784 (FESEPEPNFETE).

The protein resides in the cell projection. The protein localises to the attachment organelle. Its function is as follows. Protein cytoskeleton-associated which plays a role in gliding motility and perhaps also in mucociliary clearance. In Mycoplasma pneumoniae (strain ATCC 29342 / M129 / Subtype 1) (Mycoplasmoides pneumoniae), this protein is Protein P200 (p200).